The chain runs to 116 residues: NADH-ubiquinone oxidoreductase chain 3 (116 aa).

The next 3 helical transmembrane spans lie at 3 to 23, 56 to 76, and 87 to 107; these read LIMT…TVSF, FFLV…LLPL, and GTFF…IYEW.

It belongs to the complex I subunit 3 family.

It localises to the mitochondrion membrane. The catalysed reaction is a ubiquinone + NADH + 5 H(+)(in) = a ubiquinol + NAD(+) + 4 H(+)(out). Core subunit of the mitochondrial membrane respiratory chain NADH dehydrogenase (Complex I) that is believed to belong to the minimal assembly required for catalysis. Complex I functions in the transfer of electrons from NADH to the respiratory chain. The immediate electron acceptor for the enzyme is believed to be ubiquinone. This is NADH-ubiquinone oxidoreductase chain 3 (MT-ND3) from Carassius auratus (Goldfish).